Consider the following 57-residue polypeptide: Aminopeptidase A (57 aa).

Residues 1–57 (YLTDHYFKVDLNSTVTQQRFLLDPSELAGITIMQPSDSNIEWLKQYRDDVATWLENS) are Extracellular-facing. An N-linked (GlcNAc...) asparagine glycan is attached at asparagine 12.

It belongs to the peptidase M1 family. As to quaternary structure, homodimer; disulfide-linked. Zn(2+) is required as a cofactor.

It localises to the cell membrane. It carries out the reaction Release of N-terminal glutamate (and to a lesser extent aspartate) from a peptide.. Inhibited by the aminopeptidase competitive inhibitors amastatin (Leu and acidic inhibitor), and bestatin (Leu inhibitor), by chelating agents EDTA, and 1,10-Phenanthroline, as well as by Zn(2+) ions. Substrate specificity is modulated by Ca(2+), Ba(2+), and Mn(2+) ions which enhances the enzymatic activity for cleavage of acidic residues. Functionally, venom protein that cleaves N-terminal acidic residues from peptides with high potency in presence of calcium. It may have several roles in venom including alteration of blood pressure by cleaving circulating angiotensin-2, general degradation of host tissue, increase of permeability to other venom components, and/or processing of other toxins in the venom. The chain is Aminopeptidase A from Gloydius blomhoffii (Mamushi).